We begin with the raw amino-acid sequence, 380 residues long: E3 ubiquitin-protein ligase Iruka (380 aa).

The interval 50–92 (APEMDSSTAGASGSARSGSSGSGSSGSHDTLSRGSSSSGSQVN) is disordered. 2 stretches are compositionally biased toward low complexity: residues 55 to 68 (SSTAGASGSARSGS) and 74 to 89 (SGSHDTLSRGSSSSGS). The RING-type; atypical zinc finger occupies 253-294 (CSICWDDFKIDETVRKLPCSHLYHENCIVPWLNLHSTCPICR). Residues 317–367 (EMAADGSNSERRSASTATGTDNPSPANNPSQAAAEGGRTRPDANPAQAARN) form a disordered region. Positions 338–350 (NPSPANNPSQAAA) are enriched in low complexity.

In terms of assembly, interacts (via N-terminus) with CG7546 (via Ubl domain).

It carries out the reaction S-ubiquitinyl-[E2 ubiquitin-conjugating enzyme]-L-cysteine + [acceptor protein]-L-lysine = [E2 ubiquitin-conjugating enzyme]-L-cysteine + N(6)-ubiquitinyl-[acceptor protein]-L-lysine.. It participates in protein modification; protein ubiquitination. E3 ubiquitin-protein ligase that mediates E2-dependent, 'Lys-48'- and/or 'Lys-63'-linked polyubiquitination of substrates. Recognizes miRNA-empty Ago1 and triggers its degradation via polyubiquitination independently of the Bag6 complex. By targeting miRNA-empty Ago1, eliminates dysfunctional Ago1 not able to bind miRNA and thereby plays a role in the quality control of miRNA-mediated silencing. This chain is E3 ubiquitin-protein ligase Iruka, found in Drosophila melanogaster (Fruit fly).